Reading from the N-terminus, the 144-residue chain is Large ribosomal subunit protein uL15 (144 aa).

A disordered region spans residues 20 to 49; the sequence is GRGIGSGLGKTGGRGHKGQKSRSGGFHKVG. Positions 21 to 31 are enriched in gly residues; that stretch reads RGIGSGLGKTG.

This sequence belongs to the universal ribosomal protein uL15 family. As to quaternary structure, part of the 50S ribosomal subunit.

Its function is as follows. Binds to the 23S rRNA. The polypeptide is Large ribosomal subunit protein uL15 (Neisseria meningitidis serogroup C (strain 053442)).